A 156-amino-acid polypeptide reads, in one-letter code: Succinate dehydrogenase assembly factor 2-B, mitochondrial (156 aa).

The N-terminal 12 residues, 1-12 (MLRQILSSAVAK), are a transit peptide targeting the mitochondrion.

This sequence belongs to the SDHAF2 family. In terms of assembly, interacts with the flavoprotein subunit within the SDH catalytic dimer.

Its subcellular location is the mitochondrion matrix. Functionally, plays an essential role in the assembly of succinate dehydrogenase (SDH), an enzyme complex (also referred to as respiratory complex II) that is a component of both the tricarboxylic acid (TCA) cycle and the mitochondrial electron transport chain, and which couples the oxidation of succinate to fumarate with the reduction of ubiquinone (coenzyme Q) to ubiquinol. Required for flavinylation (covalent attachment of FAD) of the flavoprotein subunit of the SDH catalytic dimer. The sequence is that of Succinate dehydrogenase assembly factor 2-B, mitochondrial from Drosophila willistoni (Fruit fly).